A 235-amino-acid polypeptide reads, in one-letter code: Large ribosomal subunit protein bL25 (235 aa).

The tract at residues 201-235 is disordered; sequence PVAEAKGKGKAAKPAATAKPAAAAAKPAAKPKAKK. A compositionally biased stretch (low complexity) spans 212 to 228; sequence AKPAATAKPAAAAAKPA.

The protein belongs to the bacterial ribosomal protein bL25 family. CTC subfamily. As to quaternary structure, part of the 50S ribosomal subunit; part of the 5S rRNA/L5/L18/L25 subcomplex. Contacts the 5S rRNA. Binds to the 5S rRNA independently of L5 and L18.

This is one of the proteins that binds to the 5S RNA in the ribosome where it forms part of the central protuberance. The polypeptide is Large ribosomal subunit protein bL25 (Verminephrobacter eiseniae (strain EF01-2)).